A 486-amino-acid chain; its full sequence is E3 ubiquitin-protein ligase TRIM58 (486 aa).

An RING-type zinc finger spans residues 16 to 61 (CPVCLDFLQEPVSVDCGHSFCLRCISEFCEKSDGAQGGVYACPQCR). Residues 91 to 132 (PGARRCARHGEDLSRFCEEDEAALCWVCDAGPEHRTHRTAPL) form a B box-type zinc finger. Residues Cys-96, His-99, Cys-118, and His-124 each contribute to the Zn(2+) site. A coiled-coil region spans residues 193-242 (LAQEEQRQLRRLEAEERATLQRLRESKSRLVQQSKALKELADELQERCQR). Residues 273–463 (LKTACCIPGR…TPLILPPTTI (191 aa)) enclose the B30.2/SPRY domain.

It belongs to the TRIM/RBCC family. In terms of tissue distribution, expressed in erythroblasts.

The catalysed reaction is S-ubiquitinyl-[E2 ubiquitin-conjugating enzyme]-L-cysteine + [acceptor protein]-L-lysine = [E2 ubiquitin-conjugating enzyme]-L-cysteine + N(6)-ubiquitinyl-[acceptor protein]-L-lysine.. The protein operates within protein modification; protein ubiquitination. In terms of biological role, E3 ubiquitin ligase induced during late erythropoiesis. Directly binds and ubiquitinates the intermediate chain of the microtubule motor dynein (DYNC1LI1/DYNC1LI2), stimulating the degradation of the dynein holoprotein complex. May participate in the erythroblast enucleation process through regulation of nuclear polarization. This chain is E3 ubiquitin-protein ligase TRIM58 (TRIM58), found in Homo sapiens (Human).